The chain runs to 515 residues: Maturase K (515 aa).

It belongs to the intron maturase 2 family. MatK subfamily.

It is found in the plastid. The protein localises to the chloroplast. Its function is as follows. Usually encoded in the trnK tRNA gene intron. Probably assists in splicing its own and other chloroplast group II introns. This Pinus leiophylla (Chihuahua pine) protein is Maturase K.